Here is a 150-residue protein sequence, read N- to C-terminus: Soluble pyridine nucleotide transhydrogenase (150 aa).

This sequence belongs to the class-I pyridine nucleotide-disulfide oxidoreductase family. FAD serves as cofactor.

It localises to the cytoplasm. The enzyme catalyses NAD(+) + NADPH = NADH + NADP(+). In terms of biological role, conversion of NADPH, generated by peripheral catabolic pathways, to NADH, which can enter the respiratory chain for energy generation. The sequence is that of Soluble pyridine nucleotide transhydrogenase (sthA) from Pectobacterium carotovorum subsp. carotovorum (Erwinia carotovora subsp. carotovora).